The following is a 319-amino-acid chain: Taste receptor type 2 member 7 (319 aa).

Over 1-9 (MADKVQTTL) the chain is Extracellular. The helical transmembrane segment at 10-30 (LFLAVGEFSVGILGNAFIGLV) threads the bilayer. Residues 31–55 (NCMDWVKKRKIASIDLILTSLAISR) are Cytoplasmic-facing. The helical transmembrane segment at 56-76 (ICLLCVILLDCFILVLYPDVY) threads the bilayer. The Extracellular segment spans residues 77 to 94 (ATGKEMRIIDFFWTLTNH). A helical transmembrane segment spans residues 95–115 (LSIWFATCLSIYYXFRIANFF). The Cytoplasmic portion of the chain corresponds to 116-128 (HPLFLWMKWRIDR). The chain crosses the membrane as a helical span at residues 129–149 (VISWILLGCVVLSVFISLPAT). Residues 150 to 187 (ENLNADFRFCVKAKRKTNLTWSCRVNKTQHASTKLFLN) are Extracellular-facing. N-linked (GlcNAc...) asparagine glycosylation is found at asparagine 167 and asparagine 175. The chain crosses the membrane as a helical span at residues 188–208 (LATLLPFCVCLMSFFLLILSL). Over 209-235 (RRHIRRMQLSATGCRDPSTEAHVRALK) the chain is Cytoplasmic. A helical membrane pass occupies residues 236 to 256 (AVISFLLLFIAYYLSFLVATS). Over 257 to 266 (SYFMPETELA) the chain is Extracellular. A helical membrane pass occupies residues 267-287 (VIFGESIALIYPSSHSFILIL). Residues 288–319 (GNNKLRHASLKVIWKVMSILKGRKFQQHKQIG) are Cytoplasmic-facing.

It belongs to the G-protein coupled receptor T2R family.

The protein resides in the membrane. Gustducin-coupled receptor implicated in the perception of bitter compounds in the oral cavity and the gastrointestinal tract. Signals through PLCB2 and the calcium-regulated cation channel TRPM5. The protein is Taste receptor type 2 member 7 (TAS2R7) of Pan troglodytes (Chimpanzee).